The following is a 368-amino-acid chain: Proline-rich protein 5-like (368 aa).

Phosphoserine is present on Ser28. The disordered stretch occupies residues 327 to 368 (PSFPPPHRQCSSEPNITDNPDGLEEGARGSQEGSELNCASLS). Composition is skewed to polar residues over residues 335–344 (QCSSEPNITD) and 357–368 (QEGSELNCASLS).

It belongs to the PROTOR family. In terms of assembly, interacts with the mammalian target of rapamycin complex 2 (mTORC2) which contains MTOR, MLST8, PRR5, RICTOR, MAPKAP1 and DEPTOR. Interacts with RFFL. Interacts (via C-terminus) with ZFP36 (via C-terminus); this interaction may accelerate ZFP36-mediated mRNA decay during stress. Interacts with RICTOR. In terms of processing, ubiquitinated. Ubiquitination by RFFL promotes proteasomal degradation of PRR5L thereby modifying the substrate-specific activity of the mTORC2 complex. Ubiquitination by RFFL is stimulated by LPA/lysophosphatidic acid.

Functionally, associates with the mTORC2 complex that regulates cellular processes including survival and organization of the cytoskeleton. Regulates the activity of the mTORC2 complex in a substrate-specific manner preventing for instance the specific phosphorylation of PKCs and thereby controlling cell migration. Plays a role in the stimulation of ZFP36-mediated mRNA decay of several ZFP36-associated mRNAs, such as TNF-alpha and GM-CSF, in response to stress. Required for ZFP36 localization to cytoplasmic stress granule (SG) and P-body (PB) in response to stress. This chain is Proline-rich protein 5-like (PRR5L), found in Homo sapiens (Human).